The sequence spans 509 residues: ATP synthase subunit alpha (509 aa).

169 to 176 contacts ATP; the sequence is GDRQTGKT.

It belongs to the ATPase alpha/beta chains family. F-type ATPases have 2 components, CF(1) - the catalytic core - and CF(0) - the membrane proton channel. CF(1) has five subunits: alpha(3), beta(3), gamma(1), delta(1), epsilon(1). CF(0) has three main subunits: a(1), b(2) and c(9-12). The alpha and beta chains form an alternating ring which encloses part of the gamma chain. CF(1) is attached to CF(0) by a central stalk formed by the gamma and epsilon chains, while a peripheral stalk is formed by the delta and b chains.

The protein localises to the cell inner membrane. It carries out the reaction ATP + H2O + 4 H(+)(in) = ADP + phosphate + 5 H(+)(out). In terms of biological role, produces ATP from ADP in the presence of a proton gradient across the membrane. The alpha chain is a regulatory subunit. This chain is ATP synthase subunit alpha, found in Brucella ovis (strain ATCC 25840 / 63/290 / NCTC 10512).